We begin with the raw amino-acid sequence, 228 residues long: Ribosomal RNA small subunit methyltransferase G (228 aa).

S-adenosyl-L-methionine is bound by residues Gly70, Leu75, 120-121 (AE), and Arg138. The tract at residues 207 to 228 (RRGDTRGPNRRVSPRRTGGAPA) is disordered.

It belongs to the methyltransferase superfamily. RNA methyltransferase RsmG family.

The protein localises to the cytoplasm. Specifically methylates the N7 position of guanine in position 518 of 16S rRNA. This is Ribosomal RNA small subunit methyltransferase G from Mycobacterium marinum (strain ATCC BAA-535 / M).